The primary structure comprises 45 residues: Large ribosomal subunit protein bL34 (45 aa).

This sequence belongs to the bacterial ribosomal protein bL34 family.

In Streptomyces bikiniensis, this protein is Large ribosomal subunit protein bL34 (rpmH).